The following is a 254-amino-acid chain: MSLKKSPFFELRSGSVDTLLFTVKTTDLDALRTELVKRFEATPEFFADDVVAIDVRRLADGERVALADIRQMLNDVRMRPVGVVALATQGWAGEAGLPLLEARDRRVSAAKPADEAEPAPVVAEAVAAAEPAPEPAPTQISASGQTLVIDRPLRSGQQIYAKGDLVVLAPVSHGAEIIAEGNIHIYAPLRGRALAGVHGNHDARIFCTCLEPELISIAGIYRTTENPLPADILGKAVQIRLEEEKLMIEPLRLT.

This sequence belongs to the MinC family. In terms of assembly, interacts with MinD and FtsZ.

Functionally, cell division inhibitor that blocks the formation of polar Z ring septums. Rapidly oscillates between the poles of the cell to destabilize FtsZ filaments that have formed before they mature into polar Z rings. Prevents FtsZ polymerization. This chain is Probable septum site-determining protein MinC, found in Burkholderia ambifaria (strain ATCC BAA-244 / DSM 16087 / CCUG 44356 / LMG 19182 / AMMD) (Burkholderia cepacia (strain AMMD)).